A 484-amino-acid polypeptide reads, in one-letter code: Legumin type B (484 aa).

The N-terminal stretch at Met-1 to Ala-22 is a signal peptide. 2 cysteine pairs are disulfide-bonded: Cys-33–Cys-66 and Cys-109–Cys-310. Residues Ile-38 to Lys-257 enclose the Cupin type-1 1 domain. Disordered stretches follow at residues Cys-109–Lys-141, Pro-196–Val-236, and Gly-275–Gly-304. Residues Arg-117–Gln-129 show a composition bias toward low complexity. A compositionally biased stretch (acidic residues) spans Gln-284 to Glu-293. The region spanning Glu-316–Thr-463 is the Cupin type-1 2 domain.

Belongs to the 11S seed storage protein (globulins) family. As to quaternary structure, hexamer; each subunit is composed of an acidic and a basic chain derived from a single precursor and linked by a disulfide bond.

In terms of biological role, this protein found in the seeds of many leguminous and non-leguminous plants is the source of sulfur-containing amino acids in seed meals. In Vicia faba (Broad bean), this protein is Legumin type B (LEB4).